Here is a 111-residue protein sequence, read N- to C-terminus: uncharacterized protein (111 aa).

In terms of domain architecture, HIT spans 4 to 111 (IFERIIEGAV…LGGGLLGSIA (108 aa)). A Histidine triad motif motif is present at residues 96-100 (HLHIH).

This is an uncharacterized protein from Chlamydia trachomatis serovar D (strain ATCC VR-885 / DSM 19411 / UW-3/Cx).